The chain runs to 117 residues: Immunoglobulin heavy variable 7-4-1 (117 aa).

The signal sequence occupies residues 1 to 19; that stretch reads MDWTWRILFLVAAATGAHS. The tract at residues 20 to 44 is framework-1; that stretch reads QVQLVQSGSELKKPGASVKVSCKAS. Residues 20-117 form the Ig-like domain; sequence QVQLVQSGSE…EDTAVYYCAR (98 aa). A disulfide bridge links Cys41 with Cys115. Positions 45-52 are complementarity-determining-1; sequence GYTFTSYA. The interval 53 to 69 is framework-2; it reads MNWVRQAPGQGLEWMGW. A complementarity-determining-2 region spans residues 70–77; that stretch reads INTNTGNP. The tract at residues 78–115 is framework-3; it reads TYAQGFTGRFVFSLDTSVSTAYLQICSLKAEDTAVYYC. Residues 116–117 form a complementarity-determining-3 region; it reads AR.

As to quaternary structure, immunoglobulins are composed of two identical heavy chains and two identical light chains; disulfide-linked.

Its subcellular location is the secreted. It localises to the cell membrane. V region of the variable domain of immunoglobulin heavy chains that participates in the antigen recognition. Immunoglobulins, also known as antibodies, are membrane-bound or secreted glycoproteins produced by B lymphocytes. In the recognition phase of humoral immunity, the membrane-bound immunoglobulins serve as receptors which, upon binding of a specific antigen, trigger the clonal expansion and differentiation of B lymphocytes into immunoglobulins-secreting plasma cells. Secreted immunoglobulins mediate the effector phase of humoral immunity, which results in the elimination of bound antigens. The antigen binding site is formed by the variable domain of one heavy chain, together with that of its associated light chain. Thus, each immunoglobulin has two antigen binding sites with remarkable affinity for a particular antigen. The variable domains are assembled by a process called V-(D)-J rearrangement and can then be subjected to somatic hypermutations which, after exposure to antigen and selection, allow affinity maturation for a particular antigen. This is Immunoglobulin heavy variable 7-4-1 from Homo sapiens (Human).